A 125-amino-acid polypeptide reads, in one-letter code: Photosystem II extrinsic protein U (125 aa).

The signal sequence occupies residues 1–29 (MKRLLSWLTGLVVMAGLLFSLATPSGVQA).

It belongs to the PsbU family. As to quaternary structure, PSII is composed of 1 copy each of membrane proteins PsbA, PsbB, PsbC, PsbD, PsbE, PsbF, PsbH, PsbI, PsbJ, PsbK, PsbL, PsbM, PsbT, PsbX, PsbY, PsbZ, Psb30/Ycf12, peripheral proteins PsbO, CyanoQ (PsbQ), PsbU, PsbV and a large number of cofactors. It forms dimeric complexes.

The protein resides in the cellular thylakoid membrane. Its function is as follows. One of the extrinsic, lumenal subunits of photosystem II (PSII). PSII is a light-driven water plastoquinone oxidoreductase, using light energy to abstract electrons from H(2)O, generating a proton gradient subsequently used for ATP formation. The extrinsic proteins stabilize the structure of photosystem II oxygen-evolving complex (OEC), the ion environment of oxygen evolution and protect the OEC against heat-induced inactivation. In Synechococcus sp. (strain WH7803), this protein is Photosystem II extrinsic protein U.